Consider the following 148-residue polypeptide: 3-dehydroquinate dehydratase (148 aa).

Y23 (proton acceptor) is an active-site residue. N75, H81, and D88 together coordinate substrate. H101 acts as the Proton donor in catalysis. Residues 102 to 103 (LS) and R112 each bind substrate.

The protein belongs to the type-II 3-dehydroquinase family. Homododecamer.

It carries out the reaction 3-dehydroquinate = 3-dehydroshikimate + H2O. It participates in metabolic intermediate biosynthesis; chorismate biosynthesis; chorismate from D-erythrose 4-phosphate and phosphoenolpyruvate: step 3/7. Its function is as follows. Catalyzes a trans-dehydration via an enolate intermediate. This is 3-dehydroquinate dehydratase from Cellvibrio japonicus (strain Ueda107) (Pseudomonas fluorescens subsp. cellulosa).